Here is a 634-residue protein sequence, read N- to C-terminus: uncharacterized protein (634 aa).

This is an uncharacterized protein from Homo sapiens (Human).